A 142-amino-acid polypeptide reads, in one-letter code: Large ribosomal subunit protein uL11 (142 aa).

The protein belongs to the universal ribosomal protein uL11 family. As to quaternary structure, part of the ribosomal stalk of the 50S ribosomal subunit. Interacts with L10 and the large rRNA to form the base of the stalk. L10 forms an elongated spine to which L12 dimers bind in a sequential fashion forming a multimeric L10(L12)X complex. In terms of processing, one or more lysine residues are methylated.

Its function is as follows. Forms part of the ribosomal stalk which helps the ribosome interact with GTP-bound translation factors. The sequence is that of Large ribosomal subunit protein uL11 from Acinetobacter baumannii (strain AB307-0294).